Reading from the N-terminus, the 1078-residue chain is Extracellular calcium-sensing receptor (1078 aa).

Residues 1–19 (MAFYSCCWVLLALTWHTSA) form the signal peptide. Topologically, residues 20–610 (YGPDQRAQKK…KEIEFLSWTE (591 aa)) are extracellular. A ligand-binding 1 (LB1) region spans residues 22-188 (PDQRAQKKGD…QFKSFLRTIP (167 aa)). Residues Cys60 and Cys101 are joined by a disulfide bond. Residue 66-70 (RGFRW) participates in phosphate binding. Residues Ile81, Ser84, Leu87, and Leu88 each contribute to the Ca(2+) site. Asn90 is a glycosylation site (N-linked (GlcNAc...) asparagine). Thr100 contacts Ca(2+). Asn130 carries N-linked (GlcNAc...) asparagine glycosylation. Position 145 (Thr145) interacts with Ca(2+). Residues Ser147, Ala168, and Ser170 each coordinate L-tryptophan. Residues Ser170, Pro188, Asp190, Glu231, and Asp234 each contribute to the Ca(2+) site. A ligand-binding 2 (LB2) region spans residues 189-324 (NDEHQATAMA…GGTIGFALKA (136 aa)). 7 disulfide bridges follow: Cys236/Cys561, Cys358/Cys395, Cys437/Cys449, Cys542/Cys562, Cys546/Cys565, Cys568/Cys582, and Cys585/Cys598. Spermine is bound by residues Asp238 and Ser240. 2 N-linked (GlcNAc...) asparagine glycosylation sites follow: Asn261 and Asn287. Glu297 contributes to the Ca(2+) binding site. Position 297 (Glu297) interacts with L-tryptophan. N-linked (GlcNAc...) asparagine glycans are attached at residues Asn386 and Asn400. 415-417 (RIS) contributes to the phosphate binding site. N-linked (GlcNAc...) asparagine glycans are attached at residues Asn446, Asn468, and Asn488. Position 489 (Tyr489) interacts with Ca(2+). Asn541 carries N-linked (GlcNAc...) asparagine glycosylation. Residues 542–612 (CSRDCLAGTR…IEFLSWTEPF (71 aa)) are cysteine-rich (CR). Position 557 (Gly557) interacts with Ca(2+). N-linked (GlcNAc...) asparagine glycosylation occurs at Asn594. A helical transmembrane segment spans residues 611–636 (PFGIALTLFAVLGIFLTAFVLGVFIK). Residues 637 to 648 (FRNTPIVKATNR) lie on the Cytoplasmic side of the membrane. Positions 637 to 648 (FRNTPIVKATNR) are intracellular loop 1 (ICL1). The chain crosses the membrane as a helical span at residues 649 to 668 (ELSYLLLFSLLCCFSSSLFF). The Extracellular segment spans residues 669 to 674 (IGEPQD). The helical transmembrane segment at 675 to 698 (WTCRLRQPAFGISFVLCISCILVK) threads the bilayer. Residues 699–722 (TNRVLLVFEAKIPTSFHRKWWGLN) lie on the Cytoplasmic side of the membrane. An intracellular loop 2 (ICL2) region spans residues 699-722 (TNRVLLVFEAKIPTSFHRKWWGLN). Residues 723-745 (LQFLLVFLCTFMQIVICVIWLYT) form a helical membrane-spanning segment. At 746 to 769 (APPSSYRNQELEDEIIFITCHEGS) the chain is on the extracellular side. A helical transmembrane segment spans residues 770–789 (LMALGFLIGYTCLLAAICFF). Over 790-805 (FAFKSRKLPENFNEAK) the chain is Cytoplasmic. An intracellular loop 3 (ICL3) region spans residues 790 to 805 (FAFKSRKLPENFNEAK). Residues 806 to 828 (FITFSMLIFFIVWISFIPAYAST) traverse the membrane as a helical segment. Residues 829–832 (YGKF) are Extracellular-facing. The chain crosses the membrane as a helical span at residues 833-854 (VSAVEVIAILAASFGLLACIFF). At 855–1078 (NKIYIILFKP…STVTENVVNS (224 aa)) the chain is on the cytoplasmic side. Residues 855–1078 (NKIYIILFKP…STVTENVVNS (224 aa)) form a C-terminus region. Residues 880–900 (AFKVAARATLRRSNVSRKRSS) form an interaction with RNF19A region. Thr888 carries the phosphothreonine; by PKC modification. Residues 890–898 (RRSNVSRKR) form an arginine-rich retention motif region. A Phosphoserine; by PKC modification is found at Ser892. Disordered regions lie at residues 892–963 (SNVS…PRCK), 986–1006 (AMAH…SSDT), and 1030–1055 (TGLQ…PALV). At Ser899 the chain carries Phosphoserine; by PKA. Residues 900–918 (SSLGGSTGSTPSSSISSKS) are compositionally biased toward low complexity. Ser920 bears the Phosphoserine mark. The segment covering 932 to 960 (QQQPLALTQQEQQQQPLTLPQQQRSQQQP) has biased composition (low complexity). Over residues 993–1006 (THQNSLEAQKSSDT) the composition is skewed to polar residues. Phosphoserine is present on Ser1061.

It belongs to the G-protein coupled receptor 3 family. Homodimer; disulfide-linked. Interacts with VCP. Interacts with ARRB1. Phosphorylation at Thr-888 by PKC impairs coupling with G(q)/G(11) G-proteins, while it does not affect G(i)/G(o)-coupling. Phosphorylation at Ser-892 by PKC and Ser-899 by PKA promote plasma membrane localization. In terms of processing, ubiquitinated by RNF19A; which induces proteasomal degradation. Post-translationally, N-glycosylated. As to expression, expressed in the temporal lobe, frontal lobe, parietal lobe, hippocampus, and cerebellum. Also found in kidney, lung, liver, heart, skeletal muscle, placenta.

It localises to the cell membrane. In resting state, adopts an open conformation, anion-binding promoting the inactive configuration. Upon aromatic amino acid-binding, the groove in the extracellular venus flytrap module is closed, thereby inducing the formation of a novel homodimer interface between subunits. Calcium ions stabilize the active state by enhancing homodimer interactions between membrane-proximal domains to fully activate the receptor. Upon activation, the homodimer adopts an asymmetric configuration of the 7-transmembrane region that primes one protomer for G-protein coupling. G-protein binding expands the transmembrane dimer interface; the restriction imposed by the receptor dimer, in combination with intracellular loop 2 (ICL2), enables G-protein activation by facilitating conformational transition of G-protein alpha. Coupling to different classes of G-proteins results in distinct CASR-G-protein interfaces. Activated by glucose, which acts as a positive allosteric modulator. Activated by positive allosteric modulator drugs cinacalcet, evocalcet and etelcalcetide, which are clinically used for the treatment of hyperparathyroidism and familial hypocalciuric hypercalcemia. Inhibited by NPS-2143, a negative allosteric modulator tested for the treatment of hypocalcemia. Activated by velcalcetide (AMG 416), a D-amino acid-containing peptide agonist that is being evaluated for the treatment of secondary hyperparathyroidism in chronic kidney disease patients receiving hemodialysis. Velcalcetide agonist acts by forming a disulfide bond with Cys-482. G-protein-coupled receptor that senses changes in the extracellular concentration of calcium ions and plays a key role in maintaining calcium homeostasis. Senses fluctuations in the circulating calcium concentration: activated by elevated circulating calcium, leading to decreased parathyroid hormone (PTH) secretion in parathyroid glands. In kidneys, acts as a key regulator of renal tubular calcium resorption. Ligand binding causes a conformation change that triggers signaling via guanine nucleotide-binding proteins (G-proteins) and modulates the activity of downstream effectors. CASR is coupled with different G(q)/G(11), G(i)/G(o)- or G(s)-classes of G-proteins depending on the context. In the parathyroid and kidney, CASR signals through G(q)/G(11) and G(i)/G(o) G-proteins: G(q)/G(11) coupling activates phospholipase C-beta, releasing diacylglycerol (DAG) and inositol 1,4,5-trisphosphate (IP3) second messengers, while G(i)/G(o) coupling mediates inhibition of adenylate cyclase activity. The G-protein-coupled receptor activity is activated by a co-agonist mechanism: aromatic amino acids, such as Trp or Phe, act concertedly with divalent cations, such as calcium or magnesium, to achieve full receptor activation. Acts as an activator of the NLRP3 inflammasome via G(i)/G(o)-mediated signaling: down-regulation of cyclic AMP (cAMP) relieving NLRP3 inhibition by cAMP. Acts as a regulator of proton-sensing receptor GPR68 in a seesaw manner: CASR-mediated signaling inhibits GPR68 signaling in response to extracellular calcium, while GPR68 inhibits CASR in presence of extracellular protons. The sequence is that of Extracellular calcium-sensing receptor from Homo sapiens (Human).